Reading from the N-terminus, the 412-residue chain is NAD-dependent dihydropyrimidine dehydrogenase subunit PreT (412 aa).

An NAD(+)-binding site is contributed by E286.

It belongs to the NADH dehydrogenase family. As to quaternary structure, heterotetramer of 2 PreA and 2 PreT subunits.

The enzyme catalyses 5,6-dihydrouracil + NAD(+) = uracil + NADH + H(+). The catalysed reaction is 5,6-dihydrothymine + NAD(+) = thymine + NADH + H(+). Involved in pyrimidine base degradation. Catalyzes physiologically the reduction of uracil to 5,6-dihydrouracil (DHU) by using NADH as a specific cosubstrate. It also catalyzes the reverse reaction and the reduction of thymine to 5,6-dihydrothymine (DHT). The chain is NAD-dependent dihydropyrimidine dehydrogenase subunit PreT (preT) from Escherichia coli O157:H7.